Consider the following 180-residue polypeptide: ATP-dependent protease subunit HslV (180 aa).

Thr7 is an active-site residue. Na(+)-binding residues include Gly163, Cys166, and Thr169.

Belongs to the peptidase T1B family. HslV subfamily. As to quaternary structure, a double ring-shaped homohexamer of HslV is capped on each side by a ring-shaped HslU homohexamer. The assembly of the HslU/HslV complex is dependent on binding of ATP.

It localises to the cytoplasm. The catalysed reaction is ATP-dependent cleavage of peptide bonds with broad specificity.. With respect to regulation, allosterically activated by HslU binding. Protease subunit of a proteasome-like degradation complex believed to be a general protein degrading machinery. The polypeptide is ATP-dependent protease subunit HslV (Alcanivorax borkumensis (strain ATCC 700651 / DSM 11573 / NCIMB 13689 / SK2)).